The sequence spans 643 residues: Replication protein E1 (643 aa).

A Nuclear localization signal motif is present at residues 86-88 (KRK). Positions 109-118 (LSPRLQEISL) match the Nuclear export signal motif. Phosphoserine; by host is present on Ser110. Polar residues predominate over residues 152–175 (NTNAENGGSVHSTQSSGGDSSDNA). Residues 152–178 (NTNAENGGSVHSTQSSGGDSSDNAENV) are disordered. Residues 179–345 (DPHCSITELK…LTIIQHGIDD (167 aa)) are DNA-binding region. The 151-residue stretch at 444-594 (VEFISFLRAL…FPFDKNGNPV (151 aa)) folds into the SF3 helicase domain. 470-477 (GPANTGKS) contacts ATP. A Glycyl lysine isopeptide (Lys-Gly) (interchain with G-Cter in SUMO) cross-link involves residue Lys551.

Belongs to the papillomaviridae E1 protein family. As to quaternary structure, can form hexamers. Interacts with E2 protein; this interaction increases E1 DNA binding specificity. Interacts with host DNA polymerase subunit POLA2. Interacts with host single stranded DNA-binding protein RPA1. Interacts with host TOP1; this interaction stimulates the enzymatic activity of TOP1. Phosphorylated. Post-translationally, sumoylated.

It is found in the host nucleus. It carries out the reaction Couples ATP hydrolysis with the unwinding of duplex DNA by translocating in the 3'-5' direction.. The catalysed reaction is ATP + H2O = ADP + phosphate + H(+). Functionally, ATP-dependent DNA 3'-5' helicase required for initiation of viral DNA replication. It forms a complex with the viral E2 protein. The E1-E2 complex binds to the replication origin which contains binding sites for both proteins. During the initial step, a dimer of E1 interacts with a dimer of protein E2 leading to a complex that binds the viral origin of replication with high specificity. Then, a second dimer of E1 displaces the E2 dimer in an ATP-dependent manner to form the E1 tetramer. Following this, two E1 monomers are added to each half of the site, which results in the formation of two E1 trimers on the viral ori. Subsequently, two hexamers will be created. The double hexamer acts as a bi-directional helicase machinery and unwinds the viral DNA and then recruits the host DNA polymerase to start replication. The polypeptide is Replication protein E1 (Human papillomavirus 45).